Consider the following 1073-residue polypeptide: TSC22 domain family protein 1 (1073 aa).

Positions 1–98 (MHQPPESTAA…SQAQLQAQPL (98 aa)) are required for interaction with TGFBR1 and promotion of TGF-beta signaling. 6 disordered regions span residues 22 to 110 (MAHP…KKSG), 125 to 205 (ISSN…PHLP), 220 to 288 (LHHH…SPAS), 458 to 486 (VTSERESTSGSSVSSSVSTLSHYTESVGS), 607 to 628 (YSQAAPPVQTPLPGAPPPQQLQ), and 742 to 766 (VQQPSTQVPPSVIQQGAPPSSQVVP). Residues 36-45 (GSASALNAAG) are compositionally biased toward low complexity. The segment covering 58 to 70 (FPPPSLLQPPPPA) has biased composition (pro residues). Positions 84 to 100 (SLNLLSQAQLQAQPLAP) are enriched in low complexity. Residues 133–142 (EDTESYDDLD) are compositionally biased toward acidic residues. Residues 220–240 (LHHHHQIHHGHHLQHGHHHPS) show a composition bias toward basic residues. Over residues 257–271 (PVSRKLSTTGSSDSI) the composition is skewed to polar residues. The residue at position 263 (Ser263) is a Phosphoserine. Composition is skewed to low complexity over residues 272 to 288 (TPVAPTSAVSSSGSPAS) and 465 to 483 (TSGSSVSSSVSTLSHYTES). Positions 614-625 (VQTPLPGAPPPQ) are enriched in pro residues. Positions 742 to 764 (VQQPSTQVPPSVIQQGAPPSSQV) are enriched in polar residues. The interval 1006-1027 (LKEQIKELIEKNSQLEQENNLL) is leucine-zipper. The tract at residues 1037 to 1073 (AQFQAQLQTGSPPATTQPQGTTQPPAQPASQGSGPTA) is disordered. Residues 1044-1073 (QTGSPPATTQPQGTTQPPAQPASQGSGPTA) show a composition bias toward low complexity.

Belongs to the TSC-22/Dip/Bun family. Forms homodimers. Forms heterodimers. Component of a complex composed of TSC22D1 (via N-terminus), TGFBR1 and TGFBR2; the interaction between TSC22D1 and TGFBR1 is inhibited by SMAD7 and promoted by TGFB1. Interacts with SMAD7; the interaction requires TGF-beta and the interaction is inhibited by TGFBR1. Interacts with TPT1/fortilin; interaction results in the destabilization of TSC22D1 protein and prevents TSC22D1-mediated apoptosis. Interacts with SMAD4 (via N-terminus). Interacts with ACVRL1/ALK1, ACVR1/ALK2, BMPR1A/ALK3, ACVR1B/ALK4, BMPR1B/ALK6, ACVR2A/ACTRII, and BMPR2. Interacts with SMAD6. Interacts with TFE3; the interaction is enhanced in the presence of TGF-beta. As to quaternary structure, forms a heterodimer with TSC22D4/THG1. In terms of assembly, forms a heterodimer with TSC22D4/THG1. Interacts with histone H1-2. Interacts with GNL3. Interacts with histone H1-2. In terms of tissue distribution, ubiquitously expressed in adult tissues. Expressed in the postmitotic epithelial compartment at the top of intestinal mucosal villi.

The protein resides in the cytoplasm. It localises to the nucleus. It is found in the cell membrane. Its subcellular location is the mitochondrion. Its function is as follows. Transcriptional repressor. Acts on the C-type natriuretic peptide (CNP) promoter. Acts to promote CASP3-mediated apoptosis. Positively regulates TGF-beta signaling by interacting with SMAD7 which inhibits binding of SMAD7 to TGFBR1, preventing recruitment of SMURF ubiquitin ligases to TGFBR1 and inhibiting SMURF-mediated ubiquitination and degradation of TGFBR1. Contributes to enhancement of TGF-beta signaling by binding to and modulating the transcription activator activity of SMAD4. Promotes TGF-beta-induced transcription of COL1A2; via its interaction with TFE3 at E-boxes in the gene proximal promoter. Plays a role in the repression of hematopoietic precursor cell growth. Promotes IL2 deprivation-induced apoptosis in T-lymphocytes, via repression of TSC22D3/GILZ transcription and activation of the caspase cascade. In terms of biological role, may act to negatively regulate TGFB3 signaling and thereby inhibit cell death in mammary gland cells. Positively regulates cell death in response to TGFB3 during mammary gland involution. The polypeptide is TSC22 domain family protein 1 (Homo sapiens (Human)).